A 211-amino-acid polypeptide reads, in one-letter code: 2,3-bisphosphoglycerate-dependent phosphoglycerate mutase (211 aa).

Residues 9–16, 22–23, Arg-61, 88–91, Lys-99, 115–116, and 159–160 each bind substrate; these read RHGQSDWN, TG, ERDY, RR, and GN. His-10 acts as the Tele-phosphohistidine intermediate in catalysis. The Proton donor/acceptor role is filled by Glu-88.

It belongs to the phosphoglycerate mutase family. BPG-dependent PGAM subfamily. As to quaternary structure, homodimer.

The catalysed reaction is (2R)-2-phosphoglycerate = (2R)-3-phosphoglycerate. Its pathway is carbohydrate degradation; glycolysis; pyruvate from D-glyceraldehyde 3-phosphate: step 3/5. In terms of biological role, catalyzes the interconversion of 2-phosphoglycerate and 3-phosphoglycerate. The protein is 2,3-bisphosphoglycerate-dependent phosphoglycerate mutase of Rhizobium rhizogenes (strain K84 / ATCC BAA-868) (Agrobacterium radiobacter).